A 486-amino-acid chain; its full sequence is Malonate-semialdehyde dehydrogenase (486 aa).

Positions 154, 178, 181, 182, and 231 each coordinate NAD(+). The active-site Nucleophile is the Cys286. Glu386 is an NAD(+) binding site.

It belongs to the aldehyde dehydrogenase family. IolA subfamily. Homotetramer.

The enzyme catalyses 3-oxopropanoate + NAD(+) + CoA + H2O = hydrogencarbonate + acetyl-CoA + NADH + H(+). The catalysed reaction is 2-methyl-3-oxopropanoate + NAD(+) + CoA + H2O = propanoyl-CoA + hydrogencarbonate + NADH + H(+). The protein operates within polyol metabolism; myo-inositol degradation into acetyl-CoA; acetyl-CoA from myo-inositol: step 7/7. In terms of biological role, catalyzes the oxidation of malonate semialdehyde (MSA) and methylmalonate semialdehyde (MMSA) into acetyl-CoA and propanoyl-CoA, respectively. Is involved in a myo-inositol catabolic pathway. Bicarbonate, and not CO2, is the end-product of the enzymatic reaction. The protein is Malonate-semialdehyde dehydrogenase of Bacillus cereus (strain AH187).